We begin with the raw amino-acid sequence, 421 residues long: Probable mitochondrial chaperone BCS1-A (421 aa).

Topologically, residues 1-10 are mitochondrial intermembrane; it reads MNHLKDQSKS. A helical membrane pass occupies residues 11 to 31; sequence IVLGISSGIGIFLISGGINIF. Residues 32–421 are Mitochondrial matrix-facing; sequence KNVGQYILNR…VQSITPFNLN (390 aa). Position 228 to 235 (228 to 235) interacts with ATP; it reads GEPGNGKS.

Belongs to the AAA ATPase family. BCS1 subfamily.

It localises to the mitochondrion inner membrane. The catalysed reaction is ATP + H2O = ADP + phosphate + H(+). Functionally, chaperone necessary for the assembly of mitochondrial respiratory chain complex III. This chain is Probable mitochondrial chaperone BCS1-A (bcs1la), found in Dictyostelium discoideum (Social amoeba).